Consider the following 486-residue polypeptide: Palmitoyltransferase pfa5 (486 aa).

2 helical membrane-spanning segments follow: residues 12–32 and 54–74; these read AVARVIPVVLFGIIIYSCYVI and VGAGAAILVVFYILLLFVIIT. The interval 94 to 130 is disordered; the sequence is AADQQSTPAKRSKSRSRRKGHGHGHRKSKSDEVSDKP. Positions 103-121 are enriched in basic residues; the sequence is KRSKSRSRRKGHGHGHRKS. In terms of domain architecture, DHHC spans 172–222; the sequence is IYCSKCCHYKPDRTHHCREVDRCVRKMDHFCPWVGGVVSETSFKFFIQFVF. 2 consecutive transmembrane segments (helical) span residues 217–237 and 261–281; these read FIQFVFYTALFCMTVLIVCAI and LVMLTLIGLSDSLQLAAFNLT. 2 disordered regions span residues 326–357 and 433–486; these read PVPPPLSGMPTQPATGEGDNPYSPPPVPSTDP and KDAA…TGTT. The segment covering 447 to 456 has biased composition (low complexity); it reads SSYNSSPSAP. The span at 460-480 shows a compositional bias: basic residues; the sequence is RSKRKQKRGKHHHHHHHHRHS.

Belongs to the DHHC palmitoyltransferase family. PFA5 subfamily. Autopalmitoylated.

The protein resides in the membrane. It carries out the reaction L-cysteinyl-[protein] + hexadecanoyl-CoA = S-hexadecanoyl-L-cysteinyl-[protein] + CoA. This Emericella nidulans (strain FGSC A4 / ATCC 38163 / CBS 112.46 / NRRL 194 / M139) (Aspergillus nidulans) protein is Palmitoyltransferase pfa5 (pfa5).